Here is a 218-residue protein sequence, read N- to C-terminus: Small ribosomal subunit protein uS3 (218 aa).

Residues isoleucine 40–lysine 109 enclose the KH type-2 domain.

Belongs to the universal ribosomal protein uS3 family. Part of the 30S ribosomal subunit. Forms a tight complex with proteins S10 and S14.

Its function is as follows. Binds the lower part of the 30S subunit head. Binds mRNA in the 70S ribosome, positioning it for translation. This chain is Small ribosomal subunit protein uS3, found in Orientia tsutsugamushi (strain Boryong) (Rickettsia tsutsugamushi).